Here is a 100-residue protein sequence, read N- to C-terminus: NADH-quinone oxidoreductase subunit K 2 (100 aa).

Helical transmembrane passes span 4–24 (LWWYIVLGVVLFVIGAAGVLI), 28–48 (ILVVLMSLELLLNSVNINFIA), and 60–80 (IFAIFVIAITAAEVAVALGIL).

This sequence belongs to the complex I subunit 4L family. NDH-1 is composed of 14 different subunits. Subunits NuoA, H, J, K, L, M, N constitute the membrane sector of the complex.

The protein localises to the cell inner membrane. It carries out the reaction a quinone + NADH + 5 H(+)(in) = a quinol + NAD(+) + 4 H(+)(out). Its function is as follows. NDH-1 shuttles electrons from NADH, via FMN and iron-sulfur (Fe-S) centers, to quinones in the respiratory chain. The immediate electron acceptor for the enzyme in this species is believed to be ubiquinone. Couples the redox reaction to proton translocation (for every two electrons transferred, four hydrogen ions are translocated across the cytoplasmic membrane), and thus conserves the redox energy in a proton gradient. The polypeptide is NADH-quinone oxidoreductase subunit K 2 (Rhizobium etli (strain ATCC 51251 / DSM 11541 / JCM 21823 / NBRC 15573 / CFN 42)).